A 245-amino-acid chain; its full sequence is 4-hydroxy-tetrahydrodipicolinate reductase (245 aa).

NAD(+) contacts are provided by residues 7 to 12 (GAKGKV), 75 to 77 (GTT), and 102 to 105 (APNF). The active-site Proton donor/acceptor is His-132. A (S)-2,3,4,5-tetrahydrodipicolinate-binding site is contributed by His-133. The Proton donor role is filled by Lys-136. (S)-2,3,4,5-tetrahydrodipicolinate is bound at residue 142–143 (GT).

It belongs to the DapB family.

It is found in the cytoplasm. It carries out the reaction (S)-2,3,4,5-tetrahydrodipicolinate + NAD(+) + H2O = (2S,4S)-4-hydroxy-2,3,4,5-tetrahydrodipicolinate + NADH + H(+). It catalyses the reaction (S)-2,3,4,5-tetrahydrodipicolinate + NADP(+) + H2O = (2S,4S)-4-hydroxy-2,3,4,5-tetrahydrodipicolinate + NADPH + H(+). It participates in amino-acid biosynthesis; L-lysine biosynthesis via DAP pathway; (S)-tetrahydrodipicolinate from L-aspartate: step 4/4. In terms of biological role, catalyzes the conversion of 4-hydroxy-tetrahydrodipicolinate (HTPA) to tetrahydrodipicolinate. This Mycobacterium ulcerans (strain Agy99) protein is 4-hydroxy-tetrahydrodipicolinate reductase.